The sequence spans 386 residues: MMMMGEGVSSVPPWSHLPVSGVDVLGGGGGGGDEMTPYVIAALRDYLPANDVGVGADEEEEAAAMAAAVDAYACDEFRMYEFKVRRCARGRSHDWTECPFAHPGEKARRRDPRKYHYSGTACPDFRKGGCKRGDACEYAHGVFECWLHPARYRTQPCKDGTACRRRVCFFAHTPDQLRVLPAQQSSPRSVASSPLAESYDGSPLRRQAFESYLTKTIMSSSPTSTLMSPPKSPPSESPPLSPDGAAAIRRGSWPGVGSPVNDVLASFRQLRLNKVKSSPSGGWSYPSSSAVYGSPKAATGLYSLPTTPLASTATVTTASSFMPNLEPLDLGLIGDEEPVQRVESGRALREKVFERLSRDGAISGDATAFATAGVGLDVDWVSDLIN.

2 consecutive C3H1-type zinc fingers follow at residues 116-143 (HYSGTACPDFRKGGCKRGDACEYAHGVF) and 151-175 (RYRTQPCKDGTACRRRVCFFAHTPD). Disordered regions lie at residues 180-200 (LPAQQSSPRSVASSPLAESYD) and 220-252 (SSPTSTLMSPPKSPPSESPPLSPDGAAAIRRGS). Positions 182–192 (AQQSSPRSVAS) are enriched in polar residues. Residues 220 to 229 (SSPTSTLMSP) show a composition bias toward low complexity. A compositionally biased stretch (pro residues) spans 230–241 (PKSPPSESPPLS).

The protein resides in the nucleus. Involved in leaf senescence delay. May repress jasmonic acid (JA) signaling role in promoting leaf senescence. May regulate panicle development and pollination/fertilization process. This chain is Zinc finger CCCH domain-containing protein 2, found in Oryza sativa subsp. japonica (Rice).